A 308-amino-acid polypeptide reads, in one-letter code: Peroxisomal targeting signal 2 receptor (308 aa).

WD repeat units lie at residues 57–88 (DVEDSLFGVRWSQNCENQVYACCGDGSLRLFD), 101–132 (EHKAEIVAIDTNTVDRRIVVTGSWDGTIKLWL), 145–176 (GSNSRILTVATHYSSPNLLGYTSSDGLCKFWD), 187–218 (EIPNQITCMNWSKSNHRMVYTADNNNLVYCYD), 231–262 (GHQLAVRSIKSSNSAHDLLATASYDMTSRIFD), and 274–306 (LHSEFVRDVDWSDFGDGSWIASVGWDESLYIWN).

Belongs to the WD repeat peroxin-7 family. In terms of assembly, interacts with PEX21.

It localises to the cytoplasm. The protein resides in the cytosol. The protein localises to the peroxisome matrix. In terms of biological role, receptor required for the peroxisomal import of proteins containing a C-terminal PTS2-type peroxisomal targeting signal, such as 3-oxoacyl-CoA thiolase. Specifically binds to cargo proteins containing a PTS2 peroxisomal targeting signal in the cytosol. Cargo protein-binding triggers interaction with PEX21 and formation of a ternary complex composed of PEX21 and PEX7 along with PTS2-containing cargo proteins, which is tranlocated into peroxisomes by passing through the PEX13-PEX14 docking complex. The protein is Peroxisomal targeting signal 2 receptor (pex7) of Schizosaccharomyces pombe (strain 972 / ATCC 24843) (Fission yeast).